The sequence spans 301 residues: Protoheme IX farnesyltransferase (301 aa).

9 consecutive transmembrane segments (helical) span residues 29 to 49 (VVAL…PGAV), 51 to 71 (LQPL…AAAF), 101 to 121 (AFSF…WWVN), 123 to 143 (LTAW…TAYL), 150 to 170 (NIVI…TAVT), 177 to 197 (ALLL…ALAI), 223 to 243 (CILL…LVGM), 244 to 264 (SGPV…YKAW), and 281 to 301 (FSIY…YLWG).

The protein belongs to the UbiA prenyltransferase family. Protoheme IX farnesyltransferase subfamily.

The protein resides in the cell inner membrane. The catalysed reaction is heme b + (2E,6E)-farnesyl diphosphate + H2O = Fe(II)-heme o + diphosphate. It participates in porphyrin-containing compound metabolism; heme O biosynthesis; heme O from protoheme: step 1/1. Converts heme B (protoheme IX) to heme O by substitution of the vinyl group on carbon 2 of heme B porphyrin ring with a hydroxyethyl farnesyl side group. The polypeptide is Protoheme IX farnesyltransferase (Shewanella denitrificans (strain OS217 / ATCC BAA-1090 / DSM 15013)).